The primary structure comprises 499 residues: Glycerol kinase (499 aa).

Thr-12 contributes to the ADP binding site. Residues Thr-12, Thr-13, and Ser-14 each coordinate ATP. Thr-12 contributes to the sn-glycerol 3-phosphate binding site. Arg-16 contacts ADP. Residues Arg-82, Glu-83, Tyr-134, and Asp-245 each coordinate sn-glycerol 3-phosphate. Residues Arg-82, Glu-83, Tyr-134, Asp-245, and Gln-246 each contribute to the glycerol site. ADP-binding residues include Thr-267 and Gly-311. The ATP site is built by Thr-267, Gly-311, Gln-315, and Gly-412. Residues Gly-412 and Asn-416 each coordinate ADP.

The protein belongs to the FGGY kinase family.

The catalysed reaction is glycerol + ATP = sn-glycerol 3-phosphate + ADP + H(+). It participates in polyol metabolism; glycerol degradation via glycerol kinase pathway; sn-glycerol 3-phosphate from glycerol: step 1/1. Inhibited by fructose 1,6-bisphosphate (FBP). Functionally, key enzyme in the regulation of glycerol uptake and metabolism. Catalyzes the phosphorylation of glycerol to yield sn-glycerol 3-phosphate. The polypeptide is Glycerol kinase (Brucella anthropi (strain ATCC 49188 / DSM 6882 / CCUG 24695 / JCM 21032 / LMG 3331 / NBRC 15819 / NCTC 12168 / Alc 37) (Ochrobactrum anthropi)).